Reading from the N-terminus, the 185-residue chain is Elongation factor P (185 aa).

It belongs to the elongation factor P family.

The protein resides in the cytoplasm. Its pathway is protein biosynthesis; polypeptide chain elongation. Its function is as follows. Involved in peptide bond synthesis. Stimulates efficient translation and peptide-bond synthesis on native or reconstituted 70S ribosomes in vitro. Probably functions indirectly by altering the affinity of the ribosome for aminoacyl-tRNA, thus increasing their reactivity as acceptors for peptidyl transferase. The protein is Elongation factor P of Paraburkholderia xenovorans (strain LB400).